We begin with the raw amino-acid sequence, 311 residues long: GTP cyclohydrolase MptA (311 aa).

It belongs to the GTP cyclohydrolase IV family. In terms of assembly, homodimer. Fe(2+) is required as a cofactor.

It catalyses the reaction GTP + H2O = 7,8-dihydroneopterin 2',3'-cyclic phosphate + formate + diphosphate + H(+). It participates in cofactor biosynthesis; 5,6,7,8-tetrahydromethanopterin biosynthesis. In terms of biological role, converts GTP to 7,8-dihydro-D-neopterin 2',3'-cyclic phosphate, the first intermediate in the biosynthesis of coenzyme methanopterin. This is GTP cyclohydrolase MptA from Methanobrevibacter smithii (strain ATCC 35061 / DSM 861 / OCM 144 / PS).